An 885-amino-acid polypeptide reads, in one-letter code: Cadherin-1 (885 aa).

The first 26 residues, 1–26 (MGPRYGGAPALLLPLLLLLQVSSGLC), serve as a signal peptide directing secretion. The propeptide occupies 27–156 (QEPEPCRPGF…SQHGLRRQKR (130 aa)). Positions 121-131 (KAATHHHHHHH) are enriched in basic residues. The interval 121 to 141 (KAATHHHHHHHDAPSKTQTEV) is disordered. The Extracellular portion of the chain corresponds to 157 to 712 (DWVIPPISCP…YAEAGLQVPA (556 aa)). 5 Cadherin domains span residues 158–264 (WVIP…KPEF), 265–377 (TQAV…PPIF), 378–488 (NPTT…APIF), 489–597 (IPCP…GPIP), and 607–688 (KNPQ…VFVC). Asp259 lines the Ca(2+) pocket. The O-linked (Man...) serine glycan is linked to Ser282. An O-linked (Man...) threonine glycan is attached at Thr287. Asp290 contacts Ca(2+). O-linked (Man...) threonine glycans are attached at residues Thr360, Thr472, Thr474, and Thr511. Asn560 carries an N-linked (GlcNAc...) asparagine glycan. Residues Thr578, Thr580, and Thr582 are each glycosylated (O-linked (Man...) threonine). Asn639 carries N-linked (GlcNAc...) asparagine glycosylation. Residues 713 to 733 (ILGILGGILALLILILLLLLF) form a helical membrane-spanning segment. The Cytoplasmic portion of the chain corresponds to 734–885 (VRRRRVVKEP…ADMYGGGEDD (152 aa)). Residues 750 to 770 (DTRDNVYYYDEEGGGEEDQDF) are disordered. Phosphotyrosine; by SRC is present on residues Tyr756, Tyr757, and Tyr758. The span at 758-770 (YDEEGGGEEDQDF) shows a compositional bias: acidic residues. The segment at 761–772 (EGGGEEDQDFDL) is required for binding CTNND1 and PSEN1. Ser773, Ser796, Ser841, Ser843, and Ser849 each carry phosphoserine. Residues 792–811 (PTLLSVPQYRPRPANPDEIG) are disordered. Residues 814 to 885 (IDENLKAADT…ADMYGGGEDD (72 aa)) form a required for binding alpha, beta and gamma catenins region.

Homodimer; disulfide-linked. Component of an E-cadherin/ catenin adhesion complex composed of at least E-cadherin/CDH1, beta-catenin/CTNNB1 or gamma-catenin/JUP, and potentially alpha-catenin/CTNNA1; the complex is located to adherens junctions. Found in a complex composed of CDH1, RAP1A and PKP3; PKP3 acts as a scaffold protein within the complex, the complex is required for CDH1 localization to mature desmosome cell junctions. Interacts with the TRPV4 and CTNNB1 complex. Interacts with CTNND1. The stable association of CTNNA1 is controversial as CTNNA1 was shown not to bind to F-actin when assembled in the complex. Alternatively, the CTNNA1-containing complex may be linked to F-actin by other proteins such as LIMA1. Interaction with PSEN1, cleaves CDH1 resulting in the disassociation of cadherin-based adherens junctions (CAJs). Interacts with AJAP1 and DLGAP5. Interacts with TBC1D2. Interacts with LIMA1. Interacts with CAV1. Interacts with PIP5K1C. Interacts with RAB8B. Interacts with DDR1; this stabilizes CDH1 at the cell surface and inhibits its internalization. Interacts with RAPGEF2. Interacts with KLRG1. Forms a ternary complex composed of ADAM10, CADH1 and EPHA4; within the complex, CADH1 is cleaved by ADAM10 which disrupts adherens junctions. Interacts with SPEF1. Interacts with CTNNB1 and PKP2. Interacts with AMOTL2; the interaction may facilitate binding of radial actin fibers to cell junction complexes. Interacts with DSG3; the interaction is required for CDH1 localization to developing adherens junctions. In terms of processing, during apoptosis or with calcium influx, cleaved by a membrane-bound metalloproteinase (ADAM10), PS1/gamma-secretase and caspase-3. Processing by the metalloproteinase, induced by calcium influx, causes disruption of cell-cell adhesion and the subsequent release of beta-catenin into the cytoplasm. The residual membrane-tethered cleavage product is rapidly degraded via an intracellular proteolytic pathway. Cleavage by caspase-3 releases the cytoplasmic tail resulting in disintegration of the actin microfilament system. The gamma-secretase-mediated cleavage promotes disassembly of adherens junctions. During development of the cochlear organ of Corti, cleavage by ADAM10 at adherens junctions promotes pillar cell separation. N-glycosylation at Asn-639 is essential for expression, folding and trafficking. Addition of bisecting N-acetylglucosamine by MGAT3 modulates its cell membrane location. Post-translationally, ubiquitinated by a SCF complex containing SKP2, which requires prior phosphorylation by CK1/CSNK1A1. Ubiquitinated by CBLL1/HAKAI, requires prior phosphorylation at Tyr-757. In terms of processing, O-glycosylated. O-manosylated by TMTC1, TMTC2, TMTC3 or TMTC4. Thr-287 and Thr-511 are O-mannosylated by TMTC2 or TMTC4 but not TMTC1 or TMTC3.

It is found in the cell junction. The protein localises to the adherens junction. Its subcellular location is the cell membrane. It localises to the endosome. The protein resides in the golgi apparatus. It is found in the trans-Golgi network. The protein localises to the cytoplasm. Its subcellular location is the desmosome. Cadherins are calcium-dependent cell adhesion proteins. They preferentially interact with themselves in a homophilic manner in connecting cells; cadherins may thus contribute to the sorting of heterogeneous cell types. CDH1 is involved in mechanisms regulating cell-cell adhesions, mobility and proliferation of epithelial cells. Promotes organization of radial actin fiber structure and cellular response to contractile forces, via its interaction with AMOTL2 which facilitates anchoring of radial actin fibers to CDH1 junction complexes at the cell membrane. Plays a role in the early stages of desmosome cell-cell junction formation via facilitating the recruitment of DSG2 and DSP to desmosome plaques. Has a potent invasive suppressor role. It is a ligand for integrin alpha-E/beta-7. In terms of biological role, E-Cad/CTF2 promotes non-amyloidogenic degradation of Abeta precursors. Has a strong inhibitory effect on APP C99 and C83 production. This is Cadherin-1 (CDH1) from Canis lupus familiaris (Dog).